Here is a 702-residue protein sequence, read N- to C-terminus: BRCA1-associated RING domain protein 1 (702 aa).

The RING-type zinc-finger motif lies at 18 to 67 (CVKCKKPRGDLQYLGSSCKHAYCWECIATFQQKPSGKRSSVARHMCPSCA). Disordered regions lie at residues 153–205 (DENR…TSVK) and 281–346 (ASMS…YGTR). A compositionally biased stretch (polar residues) spans 174–188 (ASPTRNSTKRPSTVS). A compositionally biased stretch (basic and acidic residues) spans 312 to 321 (IKSDKIERRS). 3 ANK repeats span residues 347–376 (RGEA…CVNE), 379–408 (DGKT…VINA), and 413–442 (TLET…SIKI). The BRCT domain occupies 601-702 (MQPKLFAGCK…LGCSITTPPH (102 aa)).

Heterodimer (via RING-type zinc finger) with brc-1 to form the core CeBCD complex. Brc-1-brd-1 heterodimer-containing CeBCD complexes bound to chromatin are activated as an E3-ubiquitin ligase in response to DNA damage. The heterodimer interacts with the recombinase rad-51 following ionizing irradiation; the interaction is direct. The heterodimer interacts the E2-ubiquitin-conjugating enzyme let-70 following ionizing irradiation. The heterodimer interacts with the pro-crossover proteins msh-5 and syp-3. Interacts with smt-3, tac-1 and ubc-9. Autoubiquitinated. Post-translationally, phosphorylation of CeBCD complexes is required for E3 ubiquitin-protein ligase activity.

It localises to the cytoplasm. The protein localises to the nucleus. The protein resides in the chromosome. The enzyme catalyses S-ubiquitinyl-[E2 ubiquitin-conjugating enzyme]-L-cysteine + [acceptor protein]-L-lysine = [E2 ubiquitin-conjugating enzyme]-L-cysteine + N(6)-ubiquitinyl-[acceptor protein]-L-lysine.. The protein operates within protein modification; protein ubiquitination. Its activity is regulated as follows. E3 ubiquitin-protein ligase activity of CeBCD complexes occurs at DNA damage sites. Following DNA damage, E3 ubiquitin-protein ligase activity is reduced by caffeine treatment (inhibitor of ATM and ATK kinase activity). In terms of biological role, constituent of the CeBCD complex that possesses E3 ubiquitin-protein ligase activity. When bound to chromatin, the brc-1-brd-1 heterodimer within the CeBCD complex is inactive during normal conditions, but in response to DNA damage, the brc-1-brd-1 heterodimer associates with other proteins such as the recombinase rad-51 or the E2-ubiquitin-conjugating enzyme let-70, which activate the CeBCD complex as an E3-ubiquitin ligase. Moreover, association between the brc-1-brd-1 heterodimer and rad-51 and let-70, probably requires DNA checkpoint proteins such as atl-1 and mre-11 in order to induce ubiquitination at DNA damage sites. To this end, the brc-1-brd-1 heterodimer coordinates a diverse range of cellular pathways such as DNA damage repair, ubiquitination and transcriptional regulation to maintain genomic stability. Plays a role in triggering cellular responses at damage sites in response to DNA damage that may be induced by ionizing radiation for example. In particular, protects against chromosome non-disjunction and nuclear fragmentation during meiotic double-strand break repair to ensure sister chromatid recombination and aid chromosome stability. This is BRCA1-associated RING domain protein 1 from Caenorhabditis elegans.